Reading from the N-terminus, the 88-residue chain is Beta-insect excitatory toxin LqhIT1b (88 aa).

Positions 1–18 (MKFFLLFLVVLPIMGVLG) are cleaved as a signal peptide. Residues 20-83 (KNGYAVDSKG…ISDTTKKYCD (64 aa)) enclose the LCN-type CS-alpha/beta domain. Intrachain disulfides connect C34–C55, C40–C60, C44–C62, and C56–C82.

Belongs to the long (4 C-C) scorpion toxin superfamily. Sodium channel inhibitor family. Beta subfamily. As to expression, expressed by the venom gland.

The protein resides in the secreted. Excitatory insect toxins induce a spastic paralysis. They bind voltage-independently at site-4 of sodium channels (Nav) and shift the voltage of activation toward more negative potentials thereby affecting sodium channel activation and promoting spontaneous and repetitive firing. The sequence is that of Beta-insect excitatory toxin LqhIT1b from Leiurus hebraeus (Hebrew deathstalker scorpion).